Here is a 393-residue protein sequence, read N- to C-terminus: Dual-specificity RNA methyltransferase RlmN (393 aa).

Glu114 (proton acceptor) is an active-site residue. A Radical SAM core domain is found at 120–359 (EDDRATLCVS…VIVRKTRGDD (240 aa)). Cys127 and Cys364 are joined by a disulfide. Residues Cys134, Cys138, and Cys141 each coordinate [4Fe-4S] cluster. S-adenosyl-L-methionine contacts are provided by residues 188–189 (GE), Ser220, 242–244 (SLH), and Asn321. Cys364 (S-methylcysteine intermediate) is an active-site residue.

It belongs to the radical SAM superfamily. RlmN family. It depends on [4Fe-4S] cluster as a cofactor.

The protein localises to the cytoplasm. The catalysed reaction is adenosine(2503) in 23S rRNA + 2 reduced [2Fe-2S]-[ferredoxin] + 2 S-adenosyl-L-methionine = 2-methyladenosine(2503) in 23S rRNA + 5'-deoxyadenosine + L-methionine + 2 oxidized [2Fe-2S]-[ferredoxin] + S-adenosyl-L-homocysteine. The enzyme catalyses adenosine(37) in tRNA + 2 reduced [2Fe-2S]-[ferredoxin] + 2 S-adenosyl-L-methionine = 2-methyladenosine(37) in tRNA + 5'-deoxyadenosine + L-methionine + 2 oxidized [2Fe-2S]-[ferredoxin] + S-adenosyl-L-homocysteine. Functionally, specifically methylates position 2 of adenine 2503 in 23S rRNA and position 2 of adenine 37 in tRNAs. m2A2503 modification seems to play a crucial role in the proofreading step occurring at the peptidyl transferase center and thus would serve to optimize ribosomal fidelity. This is Dual-specificity RNA methyltransferase RlmN from Actinobacillus pleuropneumoniae serotype 3 (strain JL03).